The sequence spans 204 residues: Threonylcarbamoyl-AMP synthase (204 aa).

In terms of domain architecture, YrdC-like spans 10–204 (ADELDLVANY…KDLLAGHILR (195 aa)).

The protein belongs to the SUA5 family. TsaC subfamily.

The protein localises to the cytoplasm. The catalysed reaction is L-threonine + hydrogencarbonate + ATP = L-threonylcarbamoyladenylate + diphosphate + H2O. Its function is as follows. Required for the formation of a threonylcarbamoyl group on adenosine at position 37 (t(6)A37) in tRNAs that read codons beginning with adenine. Catalyzes the conversion of L-threonine, HCO(3)(-)/CO(2) and ATP to give threonylcarbamoyl-AMP (TC-AMP) as the acyladenylate intermediate, with the release of diphosphate. The chain is Threonylcarbamoyl-AMP synthase from Moraxella catarrhalis (strain BBH18).